The primary structure comprises 393 residues: Elongation factor Tu (393 aa).

Positions 10–203 (KPHVNIGTIG…AVDEFIPEPV (194 aa)) constitute a tr-type G domain. Residues 19–26 (GHVDHGKT) are G1. 19–26 (GHVDHGKT) contacts GTP. Thr26 contacts Mg(2+). The segment at 60-64 (GITIS) is G2. Residues 81 to 84 (DCPG) are G3. GTP is bound by residues 81–85 (DCPGH) and 136–139 (NKVD). The G4 stretch occupies residues 136 to 139 (NKVD). Residues 173-175 (SAL) form a G5 region.

This sequence belongs to the TRAFAC class translation factor GTPase superfamily. Classic translation factor GTPase family. EF-Tu/EF-1A subfamily. Monomer.

It localises to the cytoplasm. The catalysed reaction is GTP + H2O = GDP + phosphate + H(+). GTP hydrolase that promotes the GTP-dependent binding of aminoacyl-tRNA to the A-site of ribosomes during protein biosynthesis. The polypeptide is Elongation factor Tu (Chlorobium limicola (strain DSM 245 / NBRC 103803 / 6330)).